A 428-amino-acid polypeptide reads, in one-letter code: Kynureninase (428 aa).

Pyridoxal 5'-phosphate is bound by residues Thr104, Thr105, 132 to 135 (FPSD), Asp213, His216, and Tyr238. At Lys239 the chain carries N6-(pyridoxal phosphate)lysine. The pyridoxal 5'-phosphate site is built by Trp267 and Thr295.

This sequence belongs to the kynureninase family. As to quaternary structure, homodimer. Pyridoxal 5'-phosphate is required as a cofactor.

The enzyme catalyses L-kynurenine + H2O = anthranilate + L-alanine + H(+). It catalyses the reaction 3-hydroxy-L-kynurenine + H2O = 3-hydroxyanthranilate + L-alanine + H(+). The protein operates within amino-acid degradation; L-kynurenine degradation; L-alanine and anthranilate from L-kynurenine: step 1/1. It functions in the pathway cofactor biosynthesis; NAD(+) biosynthesis; quinolinate from L-kynurenine: step 2/3. Catalyzes the cleavage of L-kynurenine (L-Kyn) and L-3-hydroxykynurenine (L-3OHKyn) into anthranilic acid (AA) and 3-hydroxyanthranilic acid (3-OHAA), respectively. The chain is Kynureninase from Bacillus anthracis.